A 240-amino-acid chain; its full sequence is Ubiquinone biosynthesis O-methyltransferase (240 aa).

4 residues coordinate S-adenosyl-L-methionine: arginine 44, glycine 64, aspartate 85, and methionine 129.

The protein belongs to the methyltransferase superfamily. UbiG/COQ3 family.

It carries out the reaction a 3-demethylubiquinol + S-adenosyl-L-methionine = a ubiquinol + S-adenosyl-L-homocysteine + H(+). It catalyses the reaction a 3-(all-trans-polyprenyl)benzene-1,2-diol + S-adenosyl-L-methionine = a 2-methoxy-6-(all-trans-polyprenyl)phenol + S-adenosyl-L-homocysteine + H(+). The protein operates within cofactor biosynthesis; ubiquinone biosynthesis. In terms of biological role, O-methyltransferase that catalyzes the 2 O-methylation steps in the ubiquinone biosynthetic pathway. The sequence is that of Ubiquinone biosynthesis O-methyltransferase from Escherichia coli O157:H7.